An 87-amino-acid chain; its full sequence is U3-theraphotoxin-Cg1c (87 aa).

The N-terminal stretch at 1–23 is a signal peptide; that stretch reads MRTFTLIAILTCAVLVIFHVSAA. Positions 24 to 51 are excised as a propeptide; sequence EELEAQDVIQPEDIFTGVATLEEDRIFE. Disulfide bonds link Cys52–Cys65, Cys56–Cys79, and Cys73–Cys84.

The protein belongs to the neurotoxin 12 (Hwtx-2) family. 03 (juruin) subfamily. As to expression, expressed by the venom gland.

It localises to the secreted. Its function is as follows. Probable ion channel inhibitor. The protein is U3-theraphotoxin-Cg1c of Chilobrachys guangxiensis (Chinese earth tiger tarantula).